A 119-amino-acid chain; its full sequence is Large ribosomal subunit protein bL20 (119 aa).

The protein belongs to the bacterial ribosomal protein bL20 family.

Binds directly to 23S ribosomal RNA and is necessary for the in vitro assembly process of the 50S ribosomal subunit. It is not involved in the protein synthesizing functions of that subunit. The chain is Large ribosomal subunit protein bL20 from Dichelobacter nodosus (strain VCS1703A).